The sequence spans 394 residues: MAKAKFERVKPHVNVGTIGHVDHGKTTLTAAITNVLAKVYGGVAKDFASIDNAPEERERGITISTSHVEYDTPTRHYAHVDCPGHADYVKNMITGAAQMDGAILVVAATDGPMPQTREHILLSRQVGVPYIIVFMNKCDMVDDEELLELVEMEVRELLSEYDFPGDDLPLIQGSALKALEGEKEWEDKIVELANALDSYIPEPQRDIDKPFIMPIEDVFSIQGRGTVVTGRVEAGIIRINDEIEIVGIRDTTKSICTGVEMFRKLLDEGRAGENIGALLRGTKREDVERGQVLAKPGSIKPHTTFESEVYVLSKDEGGRHTPFFKGYRPQFYFRTTDVTGDVQLPEGVEMVMPGDNVKMTVTLIAPIAMDEGLRFAIREGGRTVGAGVVANIVA.

In terms of domain architecture, tr-type G spans Lys-10–Gln-204. A G1 region spans residues Gly-19–Thr-26. Gly-19–Thr-26 lines the GTP pocket. Thr-26 provides a ligand contact to Mg(2+). The interval Gly-60 to Ser-64 is G2. Positions Asp-81–Gly-84 are G3. GTP contacts are provided by residues Asp-81–His-85 and Asn-136–Asp-139. Residues Asn-136–Asp-139 form a G4 region. Residues Ser-174–Leu-176 form a G5 region.

The protein belongs to the TRAFAC class translation factor GTPase superfamily. Classic translation factor GTPase family. EF-Tu/EF-1A subfamily. As to quaternary structure, monomer.

It localises to the cytoplasm. The enzyme catalyses GTP + H2O = GDP + phosphate + H(+). In terms of biological role, GTP hydrolase that promotes the GTP-dependent binding of aminoacyl-tRNA to the A-site of ribosomes during protein biosynthesis. The polypeptide is Elongation factor Tu 1 (Pseudoalteromonas translucida (strain TAC 125)).